The chain runs to 107 residues: Nucleoid-associated protein PPA0205 (107 aa).

The protein belongs to the YbaB/EbfC family. Homodimer.

The protein resides in the cytoplasm. It is found in the nucleoid. Its function is as follows. Binds to DNA and alters its conformation. May be involved in regulation of gene expression, nucleoid organization and DNA protection. The sequence is that of Nucleoid-associated protein PPA0205 from Cutibacterium acnes (strain DSM 16379 / KPA171202) (Propionibacterium acnes).